The sequence spans 450 residues: Crh-like protein 4 (450 aa).

Residues 1 to 21 (MRLSLVGVAIGLLSSSAIVTA) form the signal peptide. Cys-27 and Cys-34 are disulfide-bonded. Residues 46-228 (YDFTKGSSPD…WAGGETDYSA (183 aa)) form the GH16 domain. Residue Glu-119 is the Nucleophile of the active site. Glu-123 acts as the Proton donor in catalysis. Residues Glu-123, Lys-201, Trp-205, and Thr-216 each contribute to the chitin site. Asn-383 carries N-linked (GlcNAc...) asparagine glycosylation.

Belongs to the glycosyl hydrolase 16 family. CRH1 subfamily. In terms of processing, the GPI-like anchor contains a phosphoceramide lipid group. The anchor position has not been determined.

It is found in the cell membrane. The protein localises to the secreted. It localises to the cell wall. It catalyses the reaction Random endo-hydrolysis of N-acetyl-beta-D-glucosaminide (1-&gt;4)-beta-linkages in chitin and chitodextrins.. Its function is as follows. Dual chitinase/transglycosylase that plays a role in cell wall architecture. Chitinase and transglycosylase activities are coupled. Required for the polysaccharide cross-linking at the septa and the cell wall. More specifically, transfers chitin to 1,6-beta-glucan in the cell wall. In Aspergillus fumigatus (strain ATCC MYA-4609 / CBS 101355 / FGSC A1100 / Af293) (Neosartorya fumigata), this protein is Crh-like protein 4.